We begin with the raw amino-acid sequence, 322 residues long: UDP-N-acetylenolpyruvoylglucosamine reductase (322 aa).

The FAD-binding PCMH-type domain maps to 36–202 (RAGGPAQVLF…TSVLFEGVPG (167 aa)). Residue Arg182 is part of the active site. The active-site Proton donor is Ser231. Glu301 is a catalytic residue.

This sequence belongs to the MurB family. FAD serves as cofactor.

The protein resides in the cytoplasm. The catalysed reaction is UDP-N-acetyl-alpha-D-muramate + NADP(+) = UDP-N-acetyl-3-O-(1-carboxyvinyl)-alpha-D-glucosamine + NADPH + H(+). It functions in the pathway cell wall biogenesis; peptidoglycan biosynthesis. Its function is as follows. Cell wall formation. The chain is UDP-N-acetylenolpyruvoylglucosamine reductase from Brucella suis biovar 1 (strain 1330).